Here is a 247-residue protein sequence, read N- to C-terminus: Myelin-oligodendrocyte glycoprotein (247 aa).

The first 29 residues, 1 to 29, serve as a signal peptide directing secretion; it reads MASLSRPSLPSCLCSFLLLLLLQVSSSYA. Over 30 to 154 the chain is Extracellular; the sequence is GQFRVIGPRH…EDPFYWVSPG (125 aa). The region spanning 32–145 is the Ig-like V-type domain; that stretch reads FRVIGPRHPI…EEAAMELKVE (114 aa). Cysteine 53 and cysteine 127 are oxidised to a cystine. An N-linked (GlcNAc...) asparagine glycan is attached at asparagine 60. The helical transmembrane segment at 155-175 threads the bilayer; the sequence is VLVLLAVLPVLLLQITVGLIF. At 176-210 the chain is on the cytoplasmic side; it reads LCLQYRLRGKLRAEIENLHRTFDPHFLRVPCWKIT. The chain crosses the membrane as a helical span at residues 211 to 231; the sequence is LFVIVPVLGPLVALIICYNWL. Residues 232–247 are Extracellular-facing; the sequence is HRRLAGQFLEELRNPF.

It belongs to the immunoglobulin superfamily. BTN/MOG family. As to quaternary structure, homodimer. May form heterodimers between the different isoforms. (Microbial infection) Interacts with rubella virus E2 glycoprotein. In terms of tissue distribution, found exclusively in the CNS, where it is localized on the surface of myelin and oligodendrocyte cytoplasmic membranes.

It is found in the cell membrane. Functionally, mediates homophilic cell-cell adhesion. Minor component of the myelin sheath. May be involved in completion and/or maintenance of the myelin sheath and in cell-cell communication. In terms of biological role, (Microbial infection) Acts as a receptor for rubella virus. The sequence is that of Myelin-oligodendrocyte glycoprotein (MOG) from Homo sapiens (Human).